We begin with the raw amino-acid sequence, 637 residues long: MGKVVGIDLGTTNSCVSVMEGGKPTVIANAEGFRTTPSVVAYTKNQDQLVGQIAKRQAVMNPDNTFYSVKRFIGRRVDEVNEESKEVSYGVEKAGSNVKVKCPVLDKQFAPEEVSAQVLRKLAEDAGKYLGETVTQAVITVPAYFNDSQRQATKDAGKIAGLEVLRIINEPTAAALAYGLDKKSNERILVFDLGGGTFDVSVLEVGDGVFEVLSTSGDTHLGGDDFDKVIVDHLAETFKSNEGIDLRQDKQALQRLTEAAEKAKIELSSATQSEINLPFITATPEGPKHLDLTLTRAKFEELAANLIDRCRIPVEQALKDAKLSSSELDEIVMVGGSTRIPAVLELVKRTTSKDPNQTVNPDEVVAVGAAIQGGVLAGEVKDILLLDVTPLSLGVETLGGVMTKMITRNTTVPTKKTETYSTAVDGQTNVEIHVLQGEREMASDNKSLGTFRLDGIPPAPRGVPQIEVTFDIDANGILSVTAKDKGSGKEQSISITGASTLSDSEVDKMVKDAEANASADKEKREKIDLKNQAETLVYQAEKQMGELGDKVEADAKAKVDEKRTKLQEAINAEDYDAMKTLLEELQQELYTVGASVYQQEGAAAGGAAPGGDAGASAASGGGDASDDVIDAEFTETK.

Thr-197 carries the phosphothreonine; by autocatalysis modification. Residues 602 to 637 form a disordered region; the sequence is AAAGGAAPGGDAGASAASGGGDASDDVIDAEFTETK. Residues 603-623 show a composition bias toward gly residues; sequence AAGGAAPGGDAGASAASGGGD. The segment covering 624 to 637 has biased composition (acidic residues); the sequence is ASDDVIDAEFTETK.

This sequence belongs to the heat shock protein 70 family.

Functionally, acts as a chaperone. In Parasynechococcus marenigrum (strain WH8102), this protein is Chaperone protein dnaK2 (dnaK2).